A 927-amino-acid polypeptide reads, in one-letter code: Calmodulin-binding transcription activator CBT (927 aa).

Positions 26–152 (YEKLVAEAAA…YRQTAEENAM (127 aa)) form a DNA-binding region, CG-1. Residues 70–96 (LYDRKVVRNFRKDGHNWKKKKDGRTVQ) are necessary and sufficient for nuclear localization. Positions 72 to 79 (DRKVVRNF) match the Nuclear localization signal motif. An ANK repeat occupies 609-638 (SGWTALHWAAYHGRERMVATLLSAGANPSL). IQ domains follow at residues 757–786 (EIVA…IQSH) and 799–828 (MRRQ…SVGI). The segment at 826–845 (VGIVEKAILRWRKKRKGLRG) is calmodulin-binding. Residues 830 to 851 (EKAILRWRKKRKGLRGIASGMP) are necessary and sufficient for nuclear localization. The IQ 3 domain occupies 882 to 911 (FNRSVVRVQALFRSYKAQQEYRRMKIAHEE).

It belongs to the CAMTA family.

Its subcellular location is the nucleus. Transcriptional activation activity is strongly reduced by calmodulin. In terms of biological role, transcription activator that binds calmodulin in a calcium-dependent manner in vitro. Binds to the DNA consensus sequence 5'-T[AC]CG[CT]GT[GT][GT][GT][GT]T[GT]CG-3'. In Oryza sativa subsp. japonica (Rice), this protein is Calmodulin-binding transcription activator CBT.